Consider the following 84-residue polypeptide: Delta-thalatoxin-Hhe1a (84 aa).

Positions 1–19 (MAYQKIVFVALMLVLAVSA) are cleaved as a signal peptide. A propeptide spanning residues 20–33 (MRLPDQQDQDISVA) is cleaved from the precursor. Intrachain disulfides connect C38–C78, C40–C68, and C61–C79.

The protein belongs to the sea anemone sodium channel inhibitory toxin family. Type II subfamily.

It localises to the secreted. The protein resides in the nematocyst. Functionally, binds specifically to the voltage-gated sodium channel (Nav) and delays its inactivation. This Heterodactyla hemprichii (Hemprich's sea anemone) protein is Delta-thalatoxin-Hhe1a.